The chain runs to 136 residues: Ribosome-binding factor A (136 aa).

Belongs to the RbfA family. In terms of assembly, monomer. Binds 30S ribosomal subunits, but not 50S ribosomal subunits or 70S ribosomes.

The protein resides in the cytoplasm. Its function is as follows. One of several proteins that assist in the late maturation steps of the functional core of the 30S ribosomal subunit. Associates with free 30S ribosomal subunits (but not with 30S subunits that are part of 70S ribosomes or polysomes). Required for efficient processing of 16S rRNA. May interact with the 5'-terminal helix region of 16S rRNA. This is Ribosome-binding factor A from Photorhabdus laumondii subsp. laumondii (strain DSM 15139 / CIP 105565 / TT01) (Photorhabdus luminescens subsp. laumondii).